Consider the following 140-residue polypeptide: Protein KRTCAP2 homolog (140 aa).

Helical transmembrane passes span 11–31 (LLSS…LRFC), 40–60 (LNVL…LTCV), 74–94 (AKLV…AGIV), and 98–118 (CATT…RISI).

The protein belongs to the KRTCAP2 family. In terms of assembly, component of the oligosaccharyltransferase (OST) complex.

The protein localises to the membrane. Its function is as follows. Subunit of the oligosaccharyl transferase (OST) complex that catalyzes the initial transfer of a defined glycan (Glc(3)Man(9)GlcNAc(2) in eukaryotes) from the lipid carrier dolichol-pyrophosphate to an asparagine residue within an Asn-X-Ser/Thr consensus motif in nascent polypeptide chains, the first step in protein N-glycosylation. N-glycosylation occurs cotranslationally and the complex associates with the Sec61 complex at the channel-forming translocon complex that mediates protein translocation across the endoplasmic reticulum (ER). All subunits are required for a maximal enzyme activity. The polypeptide is Protein KRTCAP2 homolog (Drosophila pseudoobscura pseudoobscura (Fruit fly)).